The following is a 132-amino-acid chain: Small ribosomal subunit protein uS8 (132 aa).

The protein belongs to the universal ribosomal protein uS8 family. As to quaternary structure, part of the 30S ribosomal subunit. Contacts proteins S5 and S12.

Functionally, one of the primary rRNA binding proteins, it binds directly to 16S rRNA central domain where it helps coordinate assembly of the platform of the 30S subunit. In Paenarthrobacter aurescens (strain TC1), this protein is Small ribosomal subunit protein uS8.